A 479-amino-acid chain; its full sequence is T-box transcription factor TBX1 (479 aa).

Composition is skewed to low complexity over residues Ala15 to Phe31 and Tyr59 to Val86. Positions Ala15–Val86 are disordered. A DNA-binding region (T-box) is located at residues Leu108 to Asp286. The interval Arg311–His398 is disordered. Residues Pro313–Gly322 are compositionally biased toward polar residues. A compositionally biased stretch (basic and acidic residues) spans Ser323 to Ser338. The Nuclear localization signal motif lies at Lys415 to Leu426.

Binds DNA as a dimer. Interacts with DSCR6. Interacts with NKX2-5. Expressed in skeletal muscle, lung and testis. Highly expressed in hair follicle stem cell, but not in terminally differentiating cells.

It is found in the nucleus. Functionally, transcription factor that plays a key role in cardiovascular development by promoting pharyngeal arch segmentation during embryonic development. Also involved in craniofacial muscle development. Together with NKX2-5, acts as a regulator of asymmetric cardiac morphogenesis by promoting expression of PITX2. Acts upstream of TBX1 for the formation of the thymus and parathyroid glands from the third pharyngeal pouch. Required for hair follicle stem cell self-renewal. Binds to the palindromic T site 5'-TTCACACCTAGGTGTGAA-3' DNA sequence. This chain is T-box transcription factor TBX1, found in Mus musculus (Mouse).